A 463-amino-acid chain; its full sequence is Digalactosyldiacylglycerol synthase 2, chloroplastic (463 aa).

A signal peptide spans 1–22; sequence MGKKQHIAIFTTASLPWLTGTA.

Belongs to the glycosyltransferase group 1 family. Glycosyltransferase 4 subfamily. As to expression, high expression in nodules infected cells, and low in nodule and root vascular tissue.

The protein localises to the plastid. The protein resides in the chloroplast outer membrane. It is found in the plastid outer membrane. The catalysed reaction is a 1,2-diacyl-3-O-(beta-D-galactosyl)-sn-glycerol + UDP-alpha-D-galactose = a 1,2-diacyl-3-O-[alpha-D-galactosyl-(1-&gt;6)-beta-D-galactosyl]-sn-glycerol + UDP + H(+). In terms of biological role, involved in the synthesis of diacylglycerol galactolipids that are specifically found in thylakoid and in nodule peribacteroid membranes. Specific for alpha-glycosidic linkages. This chain is Digalactosyldiacylglycerol synthase 2, chloroplastic, found in Lotus japonicus (Lotus corniculatus var. japonicus).